A 409-amino-acid chain; its full sequence is uncharacterized protein (409 aa).

Residues 305 to 409 (LTKIDEKVVK…LIGEDDELEM (105 aa)) enclose the HTH arsR-type domain.

This is an uncharacterized protein from Methanocaldococcus jannaschii (strain ATCC 43067 / DSM 2661 / JAL-1 / JCM 10045 / NBRC 100440) (Methanococcus jannaschii).